Reading from the N-terminus, the 388-residue chain is bZIP transcription factor ABI5 homolog (388 aa).

The interval 1-36 is disordered; it reads MASEMSKNVKVTDDQEVTSQERDQSGGTKVGGEEEI. At S44 the chain carries Phosphoserine. The bZIP domain maps to 302-365; the sequence is VERRQRRMIK…KQMLVEKMME (64 aa). Positions 304-323 are basic motif; the sequence is RRQRRMIKNRESAARSRARK. The segment at 330-344 is leucine-zipper; that stretch reads LEAELNYLKQENARL. The segment at 368–388 is disordered; that stretch reads KEKMNANRGGSQLRRSGSCMW.

The protein belongs to the bZIP family. ABI5 subfamily. As to quaternary structure, forms homodimers. Interacts with VP1. Interacts with GF14D. Interacts with PP2C51. Interacts with SAPK2. In terms of processing, phosphorylated at Ser-44 by SAPK6. Expressed in roots, leaves and panicles. Expressed in seeds.

The protein resides in the nucleus. Transcription factor that possesses transactivation activity in yeast. Involved in abscisic acid (ABA) signaling pathway. Binds to the G-box motif 5'-CACGTG-3' of TRAB1 gene promoter. Involved in the regulation of pollen maturation. May act as negative regulator of salt stress response. Together with PYL5, PP2C30 and SAPK2, is part of an ABA signaling unit that modulates seed germination and early seedling growth. The chain is bZIP transcription factor ABI5 homolog from Oryza sativa subsp. japonica (Rice).